The chain runs to 503 residues: ATP synthase subunit beta (503 aa).

Position 157–164 (glycine 157–threonine 164) interacts with ATP.

This sequence belongs to the ATPase alpha/beta chains family. In terms of assembly, F-type ATPases have 2 components, CF(1) - the catalytic core - and CF(0) - the membrane proton channel. CF(1) has five subunits: alpha(3), beta(3), gamma(1), delta(1), epsilon(1). CF(0) has three main subunits: a(1), b(2) and c(9-12). The alpha and beta chains form an alternating ring which encloses part of the gamma chain. CF(1) is attached to CF(0) by a central stalk formed by the gamma and epsilon chains, while a peripheral stalk is formed by the delta and b chains.

It is found in the cell inner membrane. It carries out the reaction ATP + H2O + 4 H(+)(in) = ADP + phosphate + 5 H(+)(out). Produces ATP from ADP in the presence of a proton gradient across the membrane. The catalytic sites are hosted primarily by the beta subunits. This chain is ATP synthase subunit beta, found in Flavobacterium johnsoniae (strain ATCC 17061 / DSM 2064 / JCM 8514 / BCRC 14874 / CCUG 350202 / NBRC 14942 / NCIMB 11054 / UW101) (Cytophaga johnsonae).